The chain runs to 310 residues: Isoflavone reductase homolog A622 (310 aa).

Residues 13–19 (GGTGYIG), R38, and K47 contribute to the NADP(+) site. The active-site Proton acceptor is K135. R139 is an NADP(+) binding site.

This sequence belongs to the NmrA-type oxidoreductase family. Isoflavone reductase subfamily. As to quaternary structure, monomer. Expressed in roots and stems.

Its subcellular location is the cytoplasm. It participates in alkaloid biosynthesis; nicotine biosynthesis. In terms of biological role, NADPH-binding protein. Involved in the biosynthesis of pyridine alkaloid natural products, leading mainly to the production of anabasine, anatabine, nicotine and nornicotine, effective deterrents against herbivores with antiparasitic and pesticide properties (neurotoxins); nornicotine serves as the precursor in the synthesis of the carcinogen compound N'-nitrosonornicotine (NNN). Reductase involved in a late step of tobacco alkaloid biosynthesis. Triggers either the formation of a nicotinic acid-derived precursor or the final condensation reaction of tobacco alkaloids. The protein is Isoflavone reductase homolog A622 of Nicotiana sylvestris (Wood tobacco).